The chain runs to 243 residues: Adenosylcobinamide-GDP ribazoletransferase (243 aa).

5 consecutive transmembrane segments (helical) span residues 31–48, 61–81, 109–129, 134–154, and 188–208; these read LLFY…LWVL, AALL…DGLA, IAVV…VALI, GFAL…LFLC, and LLLG…LFFW.

It belongs to the CobS family. Mg(2+) serves as cofactor.

The protein resides in the cell inner membrane. The catalysed reaction is alpha-ribazole + adenosylcob(III)inamide-GDP = adenosylcob(III)alamin + GMP + H(+). The enzyme catalyses alpha-ribazole 5'-phosphate + adenosylcob(III)inamide-GDP = adenosylcob(III)alamin 5'-phosphate + GMP + H(+). It functions in the pathway cofactor biosynthesis; adenosylcobalamin biosynthesis; adenosylcobalamin from cob(II)yrinate a,c-diamide: step 7/7. Functionally, joins adenosylcobinamide-GDP and alpha-ribazole to generate adenosylcobalamin (Ado-cobalamin). Also synthesizes adenosylcobalamin 5'-phosphate from adenosylcobinamide-GDP and alpha-ribazole 5'-phosphate. The chain is Adenosylcobinamide-GDP ribazoletransferase from Pseudomonas fluorescens (strain ATCC BAA-477 / NRRL B-23932 / Pf-5).